A 308-amino-acid polypeptide reads, in one-letter code: Prephenate dehydratase (308 aa).

In terms of domain architecture, Prephenate dehydratase spans 3-187 (RITYLGPEGT…AHTRFVLVGR (185 aa)). In terms of domain architecture, ACT spans 201–278 (SVVLGLGNVP…EDVRYLGSWP (78 aa)).

In terms of assembly, homodimer.

It catalyses the reaction prephenate + H(+) = 3-phenylpyruvate + CO2 + H2O. It functions in the pathway amino-acid biosynthesis; L-phenylalanine biosynthesis; phenylpyruvate from prephenate: step 1/1. This is Prephenate dehydratase (pheA) from Mycobacteroides abscessus (strain ATCC 19977 / DSM 44196 / CCUG 20993 / CIP 104536 / JCM 13569 / NCTC 13031 / TMC 1543 / L948) (Mycobacterium abscessus).